Reading from the N-terminus, the 933-residue chain is uncharacterized protein (933 aa).

The segment covering 1–28 (MNGNLPHIQIQSPKNSLDHLNNGRQATH) has biased composition (polar residues). 3 disordered regions span residues 1–135 (MNGN…GESD), 173–194 (MDNE…NAAD), and 252–275 (ATDF…ADAQ). A compositionally biased stretch (basic and acidic residues) spans 29–47 (NFEHGKPGDREEANGHADA). The span at 49–59 (SSSGRSRYLSS) shows a compositional bias: low complexity. Polar residues-rich tracts occupy residues 87 to 101 (TLSF…SNTH) and 108 to 135 (NRSS…GESD). The segment covering 173–182 (MDNESSEEER) has biased composition (acidic residues). Polar residues predominate over residues 264–275 (EPSSSRHTADAQ). WD repeat units lie at residues 314 to 353 (SSNN…HARS), 385 to 423 (GHTA…CLCC), 425 to 465 (EHSD…VSFW), 467 to 506 (ELPE…FRTQ), 517 to 563 (AKGS…LELK), 568 to 607 (ANAQ…MHKT), 617 to 657 (ASVR…SVIS), and 665 to 710 (PSLR…AARK). Residue Ser722 is modified to Phosphoserine. Residues 756-796 (NASQITNNENNGNDDIKKGDEPEEEHVGLRKNSTQEKNANL) form a disordered region. Over residues 757–768 (ASQITNNENNGN) the composition is skewed to polar residues. A compositionally biased stretch (basic and acidic residues) spans 769 to 783 (DDIKKGDEPEEEHVG).

Its subcellular location is the endoplasmic reticulum. The protein localises to the nucleus. This is an uncharacterized protein from Schizosaccharomyces pombe (strain 972 / ATCC 24843) (Fission yeast).